The primary structure comprises 91 residues: UPF0250 protein PP_4802 (91 aa).

It belongs to the UPF0250 family.

In Pseudomonas putida (strain ATCC 47054 / DSM 6125 / CFBP 8728 / NCIMB 11950 / KT2440), this protein is UPF0250 protein PP_4802.